The chain runs to 509 residues: Histidine ammonia-lyase (509 aa).

Residues alanine 142–glycine 144 constitute a cross-link (5-imidazolinone (Ala-Gly)). A 2,3-didehydroalanine (Ser) modification is found at serine 143.

Belongs to the PAL/histidase family. In terms of processing, contains an active site 4-methylidene-imidazol-5-one (MIO), which is formed autocatalytically by cyclization and dehydration of residues Ala-Ser-Gly.

The protein resides in the cytoplasm. The catalysed reaction is L-histidine = trans-urocanate + NH4(+). It participates in amino-acid degradation; L-histidine degradation into L-glutamate; N-formimidoyl-L-glutamate from L-histidine: step 1/3. The sequence is that of Histidine ammonia-lyase from Pseudomonas aeruginosa (strain LESB58).